Reading from the N-terminus, the 89-residue chain is Small ribosomal subunit protein uS15 (89 aa).

This sequence belongs to the universal ribosomal protein uS15 family. As to quaternary structure, part of the 30S ribosomal subunit. Forms a bridge to the 50S subunit in the 70S ribosome, contacting the 23S rRNA.

Its function is as follows. One of the primary rRNA binding proteins, it binds directly to 16S rRNA where it helps nucleate assembly of the platform of the 30S subunit by binding and bridging several RNA helices of the 16S rRNA. In terms of biological role, forms an intersubunit bridge (bridge B4) with the 23S rRNA of the 50S subunit in the ribosome. The chain is Small ribosomal subunit protein uS15 from Levilactobacillus brevis (strain ATCC 367 / BCRC 12310 / CIP 105137 / JCM 1170 / LMG 11437 / NCIMB 947 / NCTC 947) (Lactobacillus brevis).